The sequence spans 61 residues: Large ribosomal subunit protein bL32 (61 aa).

Positions 1–16 are enriched in basic residues; that stretch reads MAVPKRKTSPSKRGMR. Residues 1-39 are disordered; it reads MAVPKRKTSPSKRGMRRSADALKAPTYIEDKNSGELRRP. Residues 28 to 39 show a composition bias toward basic and acidic residues; that stretch reads IEDKNSGELRRP.

It belongs to the bacterial ribosomal protein bL32 family.

The protein is Large ribosomal subunit protein bL32 of Rhizobium meliloti (strain 1021) (Ensifer meliloti).